A 227-amino-acid chain; its full sequence is Uracil phosphoribosyltransferase (227 aa).

A GTP-binding site is contributed by 36 to 40; it reads KGLVK. 5-phospho-alpha-D-ribose 1-diphosphate-binding positions include Arg86, Arg111, and 145 to 153; that span reads DPMLATGST. Uracil is bound by residues Ile212 and 217–219; that span reads GDA. Asp218 lines the 5-phospho-alpha-D-ribose 1-diphosphate pocket.

Belongs to the UPRTase family. The cofactor is Mg(2+).

The catalysed reaction is UMP + diphosphate = 5-phospho-alpha-D-ribose 1-diphosphate + uracil. It participates in pyrimidine metabolism; UMP biosynthesis via salvage pathway; UMP from uracil: step 1/1. With respect to regulation, allosterically activated by GTP. Functionally, catalyzes the conversion of uracil and 5-phospho-alpha-D-ribose 1-diphosphate (PRPP) to UMP and diphosphate. The sequence is that of Uracil phosphoribosyltransferase from Halobacterium salinarum (strain ATCC 700922 / JCM 11081 / NRC-1) (Halobacterium halobium).